A 359-amino-acid chain; its full sequence is Peptide chain release factor 1 (359 aa).

An N5-methylglutamine modification is found at Gln232.

Belongs to the prokaryotic/mitochondrial release factor family. Post-translationally, methylated by PrmC. Methylation increases the termination efficiency of RF1.

It localises to the cytoplasm. Peptide chain release factor 1 directs the termination of translation in response to the peptide chain termination codons UAG and UAA. In Lawsonia intracellularis (strain PHE/MN1-00), this protein is Peptide chain release factor 1.